The sequence spans 356 residues: DNA polymerase IV (356 aa).

One can recognise a UmuC domain in the interval 1 to 188 (MDTSRKIIHI…IPVTKFYGVG (188 aa)). 2 residues coordinate Mg(2+): aspartate 11 and aspartate 106. Glutamate 107 is a catalytic residue.

Belongs to the DNA polymerase type-Y family. As to quaternary structure, monomer. Requires Mg(2+) as cofactor.

It localises to the cytoplasm. The enzyme catalyses DNA(n) + a 2'-deoxyribonucleoside 5'-triphosphate = DNA(n+1) + diphosphate. Poorly processive, error-prone DNA polymerase involved in untargeted mutagenesis. Copies undamaged DNA at stalled replication forks, which arise in vivo from mismatched or misaligned primer ends. These misaligned primers can be extended by PolIV. Exhibits no 3'-5' exonuclease (proofreading) activity. May be involved in translesional synthesis, in conjunction with the beta clamp from PolIII. The sequence is that of DNA polymerase IV from Listeria monocytogenes serotype 4b (strain F2365).